The primary structure comprises 356 residues: Protein pelota homolog (356 aa).

It belongs to the eukaryotic release factor 1 family. Pelota subfamily. As to quaternary structure, monomer. A divalent metal cation serves as cofactor.

It localises to the cytoplasm. Its function is as follows. May function in recognizing stalled ribosomes, interact with stem-loop structures in stalled mRNA molecules, and effect endonucleolytic cleavage of the mRNA. May play a role in the release non-functional ribosomes and degradation of damaged mRNAs. Has endoribonuclease activity. The polypeptide is Protein pelota homolog (Desulfurococcus amylolyticus (strain DSM 18924 / JCM 16383 / VKM B-2413 / 1221n) (Desulfurococcus kamchatkensis)).